The sequence spans 146 residues: MQKTSMLTKEEAIKNRKWYLVDASGLVLGKLAVKAANLIRGKNKANFTPNQDCGDHLIIINSDQVVLTGNKKDNEFWYHHSQYMGGIKKTSGRDMINKNSDKLVFNAVKGMLPDNRLSRRLITKVHVFKNDKHNMEAQKPTLLNWS.

The protein belongs to the universal ribosomal protein uL13 family. In terms of assembly, part of the 50S ribosomal subunit.

In terms of biological role, this protein is one of the early assembly proteins of the 50S ribosomal subunit, although it is not seen to bind rRNA by itself. It is important during the early stages of 50S assembly. The chain is Large ribosomal subunit protein uL13 from Mycoplasma genitalium (strain ATCC 33530 / DSM 19775 / NCTC 10195 / G37) (Mycoplasmoides genitalium).